The chain runs to 258 residues: Imidazole glycerol phosphate synthase subunit HisF (258 aa).

Catalysis depends on residues Asp11 and Asp130.

Belongs to the HisA/HisF family. In terms of assembly, heterodimer of HisH and HisF.

Its subcellular location is the cytoplasm. It catalyses the reaction 5-[(5-phospho-1-deoxy-D-ribulos-1-ylimino)methylamino]-1-(5-phospho-beta-D-ribosyl)imidazole-4-carboxamide + L-glutamine = D-erythro-1-(imidazol-4-yl)glycerol 3-phosphate + 5-amino-1-(5-phospho-beta-D-ribosyl)imidazole-4-carboxamide + L-glutamate + H(+). Its pathway is amino-acid biosynthesis; L-histidine biosynthesis; L-histidine from 5-phospho-alpha-D-ribose 1-diphosphate: step 5/9. Functionally, IGPS catalyzes the conversion of PRFAR and glutamine to IGP, AICAR and glutamate. The HisF subunit catalyzes the cyclization activity that produces IGP and AICAR from PRFAR using the ammonia provided by the HisH subunit. The sequence is that of Imidazole glycerol phosphate synthase subunit HisF from Shigella boydii serotype 4 (strain Sb227).